Here is a 33-residue protein sequence, read N- to C-terminus: Gaegurin-3 (33 aa).

Cysteine 27 and cysteine 33 are oxidised to a cystine.

The protein belongs to the frog skin active peptide (FSAP) family. Brevinin subfamily. In terms of assembly, monomer. In terms of tissue distribution, expressed by the skin glands.

The protein resides in the secreted. Its function is as follows. Has a non-hemolytic activity. Has a broad spectrum of activity against both Gram-positive and Gram-negative bacteria, fungi and protozoa. This Glandirana rugosa (Japanese wrinkled frog) protein is Gaegurin-3 (GGN3).